The chain runs to 207 residues: MQIGLDFNLVEDLVAGVDEVGRGPLCGAVVTAAVILDPARPILGLNDSKKLTEAKREALFDEICAKALSFCIARAEVEEIDRLNILQATMLAMQRAVEGLSVTPKLALIDGNRCPKLSVPAAPVIKGDSQVPAIAAASILAKVTRDREMSAFELIYPGYGMGGHKGYPTPVHLEALARLGPTPIHRRSFAPVRAAWEAREGITDSLI.

One can recognise an RNase H type-2 domain in the interval 12–201; sequence DLVAGVDEVG…VRAAWEAREG (190 aa). Residues Asp18, Glu19, and Asp110 each contribute to the a divalent metal cation site.

This sequence belongs to the RNase HII family. Mn(2+) serves as cofactor. The cofactor is Mg(2+).

It localises to the cytoplasm. It catalyses the reaction Endonucleolytic cleavage to 5'-phosphomonoester.. Functionally, endonuclease that specifically degrades the RNA of RNA-DNA hybrids. The protein is Ribonuclease HII of Pseudomonas putida (strain W619).